The sequence spans 342 residues: Uroporphyrinogen decarboxylase (342 aa).

Substrate is bound by residues 24–28 (RQAGR), D74, Y151, S206, and H322.

It belongs to the uroporphyrinogen decarboxylase family. As to quaternary structure, homodimer.

The protein localises to the cytoplasm. It carries out the reaction uroporphyrinogen III + 4 H(+) = coproporphyrinogen III + 4 CO2. It functions in the pathway porphyrin-containing compound metabolism; protoporphyrin-IX biosynthesis; coproporphyrinogen-III from 5-aminolevulinate: step 4/4. Its function is as follows. Catalyzes the decarboxylation of four acetate groups of uroporphyrinogen-III to yield coproporphyrinogen-III. The protein is Uroporphyrinogen decarboxylase of Paracoccus denitrificans (strain Pd 1222).